We begin with the raw amino-acid sequence, 286 residues long: Citrullinase (286 aa).

The 255-residue stretch at 4 to 258 folds into the CN hydrolase domain; that stretch reads IKVAVVQLSF…DDILYATFDF (255 aa). E43 (proton acceptor) is an active-site residue. K116 is a catalytic residue. C153 serves as the catalytic Nucleophile.

Belongs to the carbon-nitrogen hydrolase superfamily.

It carries out the reaction L-citrulline + H2O + 2 H(+) = L-ornithine + NH4(+) + CO2. Functionally, catalyzes the degradation of citrulline into ornithine, carbon dioxide and ammonia. Contributes to intramacrophage survival, in vivo growth and pathogenesis. The polypeptide is Citrullinase (Francisella tularensis subsp. tularensis (strain SCHU S4 / Schu 4)).